Consider the following 179-residue polypeptide: Large ribosomal subunit protein uL5 (179 aa).

Belongs to the universal ribosomal protein uL5 family. As to quaternary structure, part of the 50S ribosomal subunit; part of the 5S rRNA/L5/L18/L25 subcomplex. Contacts the 5S rRNA and the P site tRNA. Forms a bridge to the 30S subunit in the 70S ribosome.

Functionally, this is one of the proteins that bind and probably mediate the attachment of the 5S RNA into the large ribosomal subunit, where it forms part of the central protuberance. In the 70S ribosome it contacts protein S13 of the 30S subunit (bridge B1b), connecting the 2 subunits; this bridge is implicated in subunit movement. Contacts the P site tRNA; the 5S rRNA and some of its associated proteins might help stabilize positioning of ribosome-bound tRNAs. This chain is Large ribosomal subunit protein uL5, found in Variovorax paradoxus (strain S110).